Consider the following 397-residue polypeptide: Putative gustatory receptor 85a (397 aa).

At 1–56 (MYSLIEAQLLGGKLVNRVMASLRRIIQRSLGYFCALNGILDFNTDIGTGNLRRYRV) the chain is on the cytoplasmic side. The chain crosses the membrane as a helical span at residues 57–77 (LFMYRLLHNFAVISLTLKFLF). Topologically, residues 78 to 90 (DFTDHFKYIESST) are extracellular. Residues 91–111 (LITVNFFTYFTLVFFALLSSM) form a helical membrane-spanning segment. At 112–151 (GSCYQWQNRILAVLKELKHQRDLSRHMGYRVPRSKQNSID) the chain is on the cytoplasmic side. A helical transmembrane segment spans residues 152–172 (YLLFALTVLLILRLSIHLATF). Over 173-186 (TLSARMGFNHPCNC) the chain is Extracellular. Residues 187-207 (FLPECMIFSMNYLLFAILAEI) form a helical membrane-spanning segment. Residues 208 to 268 (TRCWWSLQSG…RYVTLAYMAR (61 aa)) are Cytoplasmic-facing. The helical transmembrane segment at 269–289 (NLWSGIVAGYLLVRFVIGNGL) threads the bilayer. The Extracellular segment spans residues 290 to 293 (QDVE). The chain crosses the membrane as a helical span at residues 294 to 314 (LVYLVFSFITCIQPLMLSLLV). Topologically, residues 315–375 (NSMTSTTGSL…FRINRSLAFR (61 aa)) are cytoplasmic. A helical transmembrane segment spans residues 376-396 (SASLILVHVLYMVQSDYISIT). Position 397 (Asn397) is a topological domain, extracellular.

It belongs to the insect chemoreceptor superfamily. Gustatory receptor (GR) family. Gr22e subfamily.

The protein resides in the cell membrane. Probable gustatory receptor which mediates acceptance or avoidance behavior, depending on its substrates. This chain is Putative gustatory receptor 85a (Gr85a), found in Drosophila melanogaster (Fruit fly).